We begin with the raw amino-acid sequence, 405 residues long: Diaminopimelate decarboxylase (405 aa).

Lysine 46 is modified (N6-(pyridoxal phosphate)lysine). Residues glycine 225 and glutamate 259–arginine 262 contribute to the pyridoxal 5'-phosphate site. Substrate-binding residues include arginine 262, arginine 298, and tyrosine 302. Catalysis depends on cysteine 329, which acts as the Proton donor. 2 residues coordinate substrate: glutamate 330 and tyrosine 358. Tyrosine 358 contacts pyridoxal 5'-phosphate.

The protein belongs to the Orn/Lys/Arg decarboxylase class-II family. LysA subfamily. In terms of assembly, homodimer. Pyridoxal 5'-phosphate is required as a cofactor.

It carries out the reaction meso-2,6-diaminopimelate + H(+) = L-lysine + CO2. It participates in amino-acid biosynthesis; L-lysine biosynthesis via DAP pathway; L-lysine from DL-2,6-diaminopimelate: step 1/1. Its function is as follows. Specifically catalyzes the decarboxylation of meso-diaminopimelate (meso-DAP) to L-lysine. This Helicobacter pylori (Campylobacter pylori) protein is Diaminopimelate decarboxylase.